Consider the following 253-residue polypeptide: TasA anchoring/assembly protein (253 aa).

Positions 1–32 (MFRLFHNQQKAKTKLKVLLIFQLSVIFSLTAA) are cleaved as a signal peptide. The interval 50–57 (TFDVSLQT) is important for TasA fiber formation. Positions 190–241 (EKPTVPKKETKSDVKKENETTQKDIPEKTMKEETSQEAVTKEKETQSDQKES) are enriched in basic and acidic residues. Positions 190-253 (EKPTVPKKET…EDEKSNEADQ (64 aa)) are disordered.

Its subcellular location is the secreted. It is found in the cell wall. Functionally, required for biofilm formation. Required for the proper anchoring and polymerization of TasA amyloid fibers at the cell surface. Is also a minor component of TasA fibers. This Bacillus subtilis (strain 168) protein is TasA anchoring/assembly protein.